The following is a 95-amino-acid chain: MGKGTGSFGKRRNKSHTLCVRCGRRSFHIQKSRCSACAYPAARKRTYNWSVKAIRRKTTGTGRMRYLRNVPRRFKTCFREGTQATPRNKAAASSS.

4 residues coordinate Zn(2+): Cys19, Cys22, Cys34, and Cys37. The C4-type zinc finger occupies Cys19–Cys37.

This sequence belongs to the eukaryotic ribosomal protein eL37 family. It depends on Zn(2+) as a cofactor.

Binds to the 23S rRNA. The protein is Large ribosomal subunit protein eL37z (RPL37A) of Arabidopsis thaliana (Mouse-ear cress).